The chain runs to 726 residues: MSTPSDQHNTLSAGKCPFHQGNSNQTAGGGTSSRDWWPNQLRVELLAQHSNRTNPLGDDFNYRKAFSELDYAALKADLKALLTDSQPWWPADWGSYTGLFIRMAWHSAGTYRSADGRGGAGRGQQRFAPLNSWPDNVSLDKARRLLWPVKQKYGQKISWADLFILAGNVALENSGFRTFGFGAGREDVWEPDMDVNWGDEKNWLEHRHPESLAQAPLGATEMGLIYVNPEGPNHSGDPASAAPAIRATFGNMGMNDEETVALIAGGHTLGKTHGAAAANHVGVDPEAAPIEAQGLGWHSSFGSGAGADAITSGLEVTWTQTPTQWSNYFFENLFKYEWVQTRSPAGAIQFEAVDAPEIIPDPFDPSKKRKPTMLVTDLTLRFDPEFEKISRRFLNDPQAFNEAFARAWYKLTHRDMGPKARYIGPEVPKEDLIWQDPLPAAIYQPTQADIDSLKAEIASAGLTVSELISVAWASASTFRGGDKRGGANGARLALAPQRDWDVNASAARALATLEAIQRTANKASLADIIVLAGVVGVEQAAKAAGVEITVPFAPGRVDARQDQTDVALFEFLKPKADGFRNYRGVRSSTPTESLLIDKAQQLTLTAPELTVLVGGMRALGANYDASAHGVFTDRVGVLSTDFFVNLLDMRYEWKATDATAEVFEGRDRESGEVKYTATRADLVFGSNSVLRSFAEVYASQDAHEKFVKDFVAAWTKVMNLDRFDIQ.

Residues 1-12 are compositionally biased toward polar residues; it reads MSTPSDQHNTLS. The tract at residues 1–34 is disordered; that stretch reads MSTPSDQHNTLSAGKCPFHQGNSNQTAGGGTSSR. Positions 105-226 form a cross-link, tryptophyl-tyrosyl-methioninium (Trp-Tyr) (with M-252); sequence WHSAGTYRSA…LGATEMGLIY (122 aa). His-106 (proton acceptor) is an active-site residue. The tryptophyl-tyrosyl-methioninium (Tyr-Met) (with W-105) cross-link spans 226–252; it reads YVNPEGPNHSGDPASAAPAIRATFGNM. His-267 contributes to the heme b binding site.

This sequence belongs to the peroxidase family. Peroxidase/catalase subfamily. Homodimer or homotetramer. Requires heme b as cofactor. Formation of the three residue Trp-Tyr-Met cross-link is important for the catalase, but not the peroxidase activity of the enzyme.

The catalysed reaction is H2O2 + AH2 = A + 2 H2O. The enzyme catalyses 2 H2O2 = O2 + 2 H2O. Its function is as follows. Bifunctional enzyme with both catalase and broad-spectrum peroxidase activity. In Cronobacter sakazakii (strain ATCC BAA-894) (Enterobacter sakazakii), this protein is Catalase-peroxidase.